The chain runs to 102 residues: Transposable element activator uncharacterized 12 kDa protein (102 aa).

Residues 24-51 are compositionally biased toward basic residues; the sequence is HNHNQNHNHSHNLNPKKKHHRRGQRSAH. The segment at 24–55 is disordered; it reads HNHNQNHNHSHNLNPKKKHHRRGQRSAHRMYG.

This chain is Transposable element activator uncharacterized 12 kDa protein, found in Zea mays (Maize).